We begin with the raw amino-acid sequence, 243 residues long: MFSRAALLTAQRPLTVAATRSAAAAAAPGGAIERRQRPEHPGKVRLGFLPEEWFQFFYNKTGVTGPYTFGVGLITYLCSKEIYVMEHEYYSGLSLGIMAIIAVKKLGPVIAKWADGEIDKIESEWKEGREAELKVLSDAIEAEKKEQWRADGALLLMEAKKENIALQLEAAFRERAMNVYSEVKRRLDYQVECRHVERRLSQKHMVNWITTNVLASISPQQEKETLNKCIADLSALALRVKSA.

The protein belongs to the eukaryotic ATPase B chain family. In terms of assembly, F-type ATPases have 2 components, CF(1) - the catalytic core - and CF(0) - the membrane proton channel. CF(1) has five subunits: alpha(3), beta(3), gamma(1), delta(1), epsilon(1). CF(0) has three main subunits: a, b and c.

It localises to the mitochondrion. It is found in the mitochondrion inner membrane. Mitochondrial membrane ATP synthase (F(1)F(0) ATP synthase or Complex V) produces ATP from ADP in the presence of a proton gradient across the membrane which is generated by electron transport complexes of the respiratory chain. F-type ATPases consist of two structural domains, F(1) - containing the extramembraneous catalytic core, and F(0) - containing the membrane proton channel, linked together by a central stalk and a peripheral stalk. During catalysis, ATP synthesis in the catalytic domain of F(1) is coupled via a rotary mechanism of the central stalk subunits to proton translocation. Part of the complex F(0) domain and the peripheric stalk, which acts as a stator to hold the catalytic alpha(3)beta(3) subcomplex and subunit a/ATP6 static relative to the rotary elements. The protein is ATP synthase subunit b, mitochondrial of Drosophila melanogaster (Fruit fly).